Consider the following 328-residue polypeptide: Glycerol-3-phosphate dehydrogenase [NAD(P)+] (328 aa).

The NADPH site is built by Trp15, His35, Tyr51, and Lys107. Sn-glycerol 3-phosphate is bound by residues Lys107, Gly135, and Ser137. Ala139 contributes to the NADPH binding site. The sn-glycerol 3-phosphate site is built by Lys190, Asp243, Ser253, Arg254, and Asn255. The active-site Proton acceptor is Lys190. Arg254 serves as a coordination point for NADPH. Positions 276 and 278 each coordinate NADPH.

It belongs to the NAD-dependent glycerol-3-phosphate dehydrogenase family.

The protein resides in the cytoplasm. The enzyme catalyses sn-glycerol 3-phosphate + NAD(+) = dihydroxyacetone phosphate + NADH + H(+). It catalyses the reaction sn-glycerol 3-phosphate + NADP(+) = dihydroxyacetone phosphate + NADPH + H(+). It participates in membrane lipid metabolism; glycerophospholipid metabolism. Functionally, catalyzes the reduction of the glycolytic intermediate dihydroxyacetone phosphate (DHAP) to sn-glycerol 3-phosphate (G3P), the key precursor for phospholipid synthesis. This Rhodopseudomonas palustris (strain BisA53) protein is Glycerol-3-phosphate dehydrogenase [NAD(P)+].